The primary structure comprises 166 residues: Lipoprotein signal peptidase (166 aa).

The next 3 helical transmembrane spans lie at 12 to 32, 70 to 90, and 102 to 122; these read WLWV…LILQ, WFFS…MYRS, and ALII…GFVV. Catalysis depends on residues aspartate 123 and aspartate 141. The helical transmembrane segment at 137-157 threads the bilayer; the sequence is FNLADSAICIGAALIVLEGFL.

Belongs to the peptidase A8 family.

Its subcellular location is the cell inner membrane. The enzyme catalyses Release of signal peptides from bacterial membrane prolipoproteins. Hydrolyzes -Xaa-Yaa-Zaa-|-(S,diacylglyceryl)Cys-, in which Xaa is hydrophobic (preferably Leu), and Yaa (Ala or Ser) and Zaa (Gly or Ala) have small, neutral side chains.. Its pathway is protein modification; lipoprotein biosynthesis (signal peptide cleavage). This protein specifically catalyzes the removal of signal peptides from prolipoproteins. The chain is Lipoprotein signal peptidase from Klebsiella pneumoniae (strain 342).